Here is a 702-residue protein sequence, read N- to C-terminus: Phosphatase and actin regulator 4 (702 aa).

3 disordered regions span residues Met1–Ser38, Gly82–Gly194, and Asn222–Ala363. Residues Glu63–Pro88 form an RPEL 1 repeat. The span at Gly106–Val120 shows a compositional bias: polar residues. 4 positions are modified to phosphoserine: Ser116, Ser118, Ser131, and Ser147. A compositionally biased stretch (polar residues) spans Ser147–Ala156. Residues Val163–Arg173 show a composition bias toward pro residues. A compositionally biased stretch (low complexity) spans Thr233–Thr250. Ser270 and Ser291 each carry phosphoserine. Residues Pro301–Thr318 are compositionally biased toward polar residues. 2 positions are modified to phosphoserine: Ser342 and Ser344. Residues Ser342–Pro362 show a composition bias toward pro residues. At Thr358 the chain carries Phosphothreonine. Ser427 carries the phosphoserine modification. At Thr432 the chain carries Phosphothreonine. 3 positions are modified to phosphoserine: Ser443, Ser453, and Ser464. A disordered region spans residues Lys473–Ser536. Residues Pro486–Ser497 show a composition bias toward low complexity. The segment covering Glu508 to Ser518 has biased composition (acidic residues). 4 positions are modified to phosphoserine: Ser514, Ser516, Ser557, and Ser590. 2 RPEL repeats span residues Asn583–Asn608 and Arg621–Glu646. Positions Arg592–Glu615 are disordered. Ser628 carries the post-translational modification Phosphoserine.

It belongs to the phosphatase and actin regulator family. As to quaternary structure, binds PPP1CA and actin.

Its subcellular location is the cytoplasm. It localises to the cell projection. It is found in the lamellipodium. Its function is as follows. Regulator of protein phosphatase 1 (PP1) required for neural tube and optic fissure closure, and enteric neural crest cell (ENCCs) migration during development. Acts as an activator of PP1 by interacting with PPP1CA and preventing phosphorylation of PPP1CA at 'Thr-320'. During neural tube closure, localizes to the ventral neural tube and activates PP1, leading to down-regulate cell proliferation within cranial neural tissue and the neural retina. Also acts as a regulator of migration of enteric neural crest cells (ENCCs) by activating PP1, leading to dephosphorylation and subsequent activation of cofilin (COF1 or COF2) and repression of the integrin signaling through the RHO/ROCK pathway. The chain is Phosphatase and actin regulator 4 (PHACTR4) from Pongo abelii (Sumatran orangutan).